The sequence spans 264 residues: Thymidylate synthase (264 aa).

Position 21 (arginine 21) interacts with dUMP. Histidine 51 serves as a coordination point for (6R)-5,10-methylene-5,6,7,8-tetrahydrofolate. A dUMP-binding site is contributed by 126-127; that stretch reads RR. Cysteine 146 serves as the catalytic Nucleophile. DUMP contacts are provided by residues 166–169, asparagine 177, and 207–209; these read RSAD and HLY. Aspartate 169 lines the (6R)-5,10-methylene-5,6,7,8-tetrahydrofolate pocket. Serine 263 contributes to the (6R)-5,10-methylene-5,6,7,8-tetrahydrofolate binding site.

The protein belongs to the thymidylate synthase family. Bacterial-type ThyA subfamily. Homodimer.

It localises to the cytoplasm. The catalysed reaction is dUMP + (6R)-5,10-methylene-5,6,7,8-tetrahydrofolate = 7,8-dihydrofolate + dTMP. It functions in the pathway pyrimidine metabolism; dTTP biosynthesis. Catalyzes the reductive methylation of 2'-deoxyuridine-5'-monophosphate (dUMP) to 2'-deoxythymidine-5'-monophosphate (dTMP) while utilizing 5,10-methylenetetrahydrofolate (mTHF) as the methyl donor and reductant in the reaction, yielding dihydrofolate (DHF) as a by-product. This enzymatic reaction provides an intracellular de novo source of dTMP, an essential precursor for DNA biosynthesis. The sequence is that of Thymidylate synthase from Neisseria gonorrhoeae (strain ATCC 700825 / FA 1090).